We begin with the raw amino-acid sequence, 396 residues long: Flavohemoprotein (396 aa).

The Globin domain occupies 1–136; the sequence is MLDAQTIATV…LANVFINREA (136 aa). Histidine 85 lines the heme b pocket. Residues tyrosine 95 and glutamate 135 each act as charge relay system in the active site. The segment at 147-396 is reductase; the sequence is GGWEGTRDFR…YECFGPHKVL (250 aa). In terms of domain architecture, FAD-binding FR-type spans 150-255; the sequence is EGTRDFRIVA…VAPAGDFFMA (106 aa). Residues tyrosine 188 and 204 to 207 contribute to the FAD site; that span reads RQYS. 268 to 273 contributes to the NADP(+) binding site; the sequence is GVGQTP. FAD is bound at residue 389–392; it reads CFGP.

It belongs to the globin family. Two-domain flavohemoproteins subfamily. The protein in the C-terminal section; belongs to the flavoprotein pyridine nucleotide cytochrome reductase family. It depends on heme b as a cofactor. FAD serves as cofactor.

The enzyme catalyses 2 nitric oxide + NADPH + 2 O2 = 2 nitrate + NADP(+) + H(+). It catalyses the reaction 2 nitric oxide + NADH + 2 O2 = 2 nitrate + NAD(+) + H(+). Is involved in NO detoxification in an aerobic process, termed nitric oxide dioxygenase (NOD) reaction that utilizes O(2) and NAD(P)H to convert NO to nitrate, which protects the bacterium from various noxious nitrogen compounds. Therefore, plays a central role in the inducible response to nitrosative stress. This chain is Flavohemoprotein, found in Escherichia coli O6:H1 (strain CFT073 / ATCC 700928 / UPEC).